We begin with the raw amino-acid sequence, 496 residues long: RNA-binding motif protein, Y chromosome, family 1 member B (496 aa).

The RRM domain occupies G8–K85. Disordered stretches follow at residues D67–Y349 and K452–Y496. Composition is skewed to low complexity over residues P97–G114 and P149–G159. Positions N175–M184 are enriched in polar residues. Composition is skewed to basic and acidic residues over residues R204–G214, D242–S253, A276–Y289, G313–Y326, S335–Y349, and G484–Y496.

As to quaternary structure, interacts with splicing factor proteins SFRS3/SRP20, TRA2B/SFRS10, KHDRBS1/SAM68 and KHDRBS3. As to expression, testis-specific.

The protein resides in the nucleus. Its function is as follows. RNA-binding protein which may be involved in spermatogenesis. Required for sperm development, possibly by participating in pre-mRNA splicing in the testis. The polypeptide is RNA-binding motif protein, Y chromosome, family 1 member B (RBMY1B) (Homo sapiens (Human)).